An 84-amino-acid chain; its full sequence is Toxin Cll9 (84 aa).

The signal sequence occupies residues 1 to 19 (MNSLLMITACLILIGTVWA). The region spanning 20-83 (EDGYLFDKRK…ISRTPGKTCK (64 aa)) is the LCN-type CS-alpha/beta domain. Cystine bridges form between C31–C82, C35–C58, C44–C63, and C48–C65.

In terms of tissue distribution, expressed by the venom gland.

The protein localises to the secreted. Functionally, beta toxins bind voltage-independently at site-4 of sodium channels (Nav) and shift the voltage of activation toward more negative potentials thereby affecting sodium channel activation and promoting spontaneous and repetitive firing. Has some action on peripheral ganglia, but not on other sodium channels such as those from cerebellum granular cells in culture. Induces sleep, suggesting a strong antiepileptic action. The protein is Toxin Cll9 of Centruroides limpidus (Mexican scorpion).